Reading from the N-terminus, the 166-residue chain is Interferon gamma (166 aa).

Residues 1–23 (MKYTSYILAFQLCVVLGSLGCYC) form the signal peptide. The residue at position 24 (glutamine 24) is a Pyrrolidone carboxylic acid. N-linked (GlcNAc...) asparagine glycosylation is found at asparagine 48, asparagine 86, and asparagine 120.

The protein belongs to the type II (or gamma) interferon family. Homodimer. Interacts with IFNGR1 (via extracellular domain); this interaction promotes IFNGR1 dimerization. Released primarily from activated T lymphocytes.

The protein resides in the secreted. Functionally, type II interferon produced by immune cells such as T-cells and NK cells that plays crucial roles in antimicrobial, antiviral, and antitumor responses by activating effector immune cells and enhancing antigen presentation. Primarily signals through the JAK-STAT pathway after interaction with its receptor IFNGR1 to affect gene regulation. Upon IFNG binding, IFNGR1 intracellular domain opens out to allow association of downstream signaling components JAK2, JAK1 and STAT1, leading to STAT1 activation, nuclear translocation and transcription of IFNG-regulated genes. Many of the induced genes are transcription factors such as IRF1 that are able to further drive regulation of a next wave of transcription. Plays a role in class I antigen presentation pathway by inducing a replacement of catalytic proteasome subunits with immunoproteasome subunits. In turn, increases the quantity, quality, and repertoire of peptides for class I MHC loading. Increases the efficiency of peptide generation also by inducing the expression of activator PA28 that associates with the proteasome and alters its proteolytic cleavage preference. Up-regulates as well MHC II complexes on the cell surface by promoting expression of several key molecules such as cathepsins B/CTSB, H/CTSH, and L/CTSL. Participates in the regulation of hematopoietic stem cells during development and under homeostatic conditions by affecting their development, quiescence, and differentiation. The polypeptide is Interferon gamma (IFNG) (Callithrix jacchus (White-tufted-ear marmoset)).